Here is a 94-residue protein sequence, read N- to C-terminus: Cyclin-dependent kinases regulatory subunit (94 aa).

It belongs to the CKS family. In terms of assembly, forms a homohexamer that can probably bind six kinase subunits. Interacts with cdk-1.

The protein resides in the nucleus. Its function is as follows. Binds to the catalytic subunit of the cyclin dependent kinases and is essential for their biological function. Has a role in the exit from M phase during early mitotic cell division. More specifically, thought to act by the degrading B-type cyclins that causes breakdown of nuclear envelope and exit mitosis. The chain is Cyclin-dependent kinases regulatory subunit from Caenorhabditis briggsae.